Consider the following 631-residue polypeptide: 1-deoxy-D-xylulose-5-phosphate synthase (631 aa).

Residues H87 and 128 to 130 (GHS) contribute to the thiamine diphosphate site. Residue D159 coordinates Mg(2+). Thiamine diphosphate is bound by residues 160–161 (GA), N188, F295, and E378. N188 is a binding site for Mg(2+).

This sequence belongs to the transketolase family. DXPS subfamily. In terms of assembly, homodimer. Mg(2+) is required as a cofactor. Thiamine diphosphate serves as cofactor.

The catalysed reaction is D-glyceraldehyde 3-phosphate + pyruvate + H(+) = 1-deoxy-D-xylulose 5-phosphate + CO2. Its pathway is metabolic intermediate biosynthesis; 1-deoxy-D-xylulose 5-phosphate biosynthesis; 1-deoxy-D-xylulose 5-phosphate from D-glyceraldehyde 3-phosphate and pyruvate: step 1/1. Catalyzes the acyloin condensation reaction between C atoms 2 and 3 of pyruvate and glyceraldehyde 3-phosphate to yield 1-deoxy-D-xylulose-5-phosphate (DXP). The polypeptide is 1-deoxy-D-xylulose-5-phosphate synthase (Pseudomonas syringae pv. tomato (strain ATCC BAA-871 / DC3000)).